A 551-amino-acid polypeptide reads, in one-letter code: Podocalyxin (551 aa).

The signal sequence occupies residues 1–21 (MRSALALAALLLLLLSPPSLS). The interval 18–324 (PSLSQEKSPQ…QRVSCGPPER (307 aa)) is disordered. Residues 22 to 452 (QEKSPQPGPT…PPEETEDRFS (431 aa)) lie on the Extracellular side of the membrane. Residues 32–59 (PMATSTSTRPAPASAPAPKSSVAASVPA) show a composition bias toward low complexity. Residues 60-90 (EQNTTPMTTKAPATQSPSASPGSSVENSAPA) are compositionally biased toward polar residues. The segment covering 91–104 (QGSTTTQQSLSVTT) has biased composition (low complexity). The segment covering 142-164 (APSNHSITTKPLATEATSQAPRQ) has biased composition (polar residues). N-linked (GlcNAc...) asparagine glycosylation is found at Asn-145 and Asn-180. Over residues 234 to 244 (PVASSAETQGM) the composition is skewed to polar residues. The span at 289–300 (TSSSTELASTAL) shows a compositional bias: low complexity. Residue Asn-333 is glycosylated (N-linked (GlcNAc...) asparagine). A helical membrane pass occupies residues 453 to 473 (LPLIITIVCMASFLLLVAALY). At 474-551 (GCCHQRLSHR…DLDEEEDTHL (78 aa)) the chain is on the cytoplasmic side. Thr-511 is modified (phosphothreonine). Residue Ser-530 is modified to Phosphoserine. Thr-549 is modified (phosphothreonine).

It belongs to the podocalyxin family. In terms of assembly, monomer; when associated with the membrane raft. Oligomer; when integrated in the apical membrane. Found in a complex with EZR, PODXL and NHERF2. Associates with the actin cytoskeleton through complex formation with EZR and NHERF2. Interacts (via the C-terminal PDZ-binding motif DTHL) with NHERF1 (via the PDZ domains); interaction is not detected in glomerular epithelium cells, take place early in the secretory pathway and is necessary for its apical membrane sorting. Interacts (via the C-terminal PDZ-binding motif DTHL) with NHERF2 (via the PDZ 1 domain); interaction is detected in glomerular epithelium cells. Interacts with EZR. N- and O-linked glycosylated. Sialoglycoprotein. In terms of tissue distribution, glomerular epithelium cell (podocyte) and endothelial cells.

It is found in the apical cell membrane. Its subcellular location is the cell projection. The protein resides in the microvillus. It localises to the membrane raft. The protein localises to the lamellipodium. It is found in the filopodium. Its subcellular location is the ruffle. The protein resides in the membrane. Functionally, involved in the regulation of both adhesion and cell morphology and cancer progression. Functions as an anti-adhesive molecule that maintains an open filtration pathway between neighboring foot processes in the podocyte by charge repulsion. Acts as a pro-adhesive molecule, enhancing the adherence of cells to immobilized ligands, increasing the rate of migration and cell-cell contacts in an integrin-dependent manner. Induces the formation of apical actin-dependent microvilli. Involved in the formation of a preapical plasma membrane subdomain to set up initial epithelial polarization and the apical lumen formation during renal tubulogenesis. Plays a role in cancer development and aggressiveness by inducing cell migration and invasion through its interaction with the actin-binding protein EZR. Affects EZR-dependent signaling events, leading to increased activities of the MAPK and PI3K pathways in cancer cells. The sequence is that of Podocalyxin (PODXL) from Oryctolagus cuniculus (Rabbit).